Consider the following 174-residue polypeptide: Protein RESTRICTED TEV MOVEMENT 1 (174 aa).

The region spanning 1–152 is the Jacalin-type lectin domain; it reads MKIGPVGKHD…LQYIGVYLRP (152 aa).

This sequence belongs to the jacalin lectin family. Self-interacts. Interacts with RTM3. As to expression, expressed at low levels exclusively in phloem-associated cells (e.g. sieve elements and adjacent cells).

The protein localises to the cytoplasm. Required for the restriction of long-distance movement of the pathogenic tobacco etch virus (TEV) without causing a hypersensitive response or inducing systemic acquired resistance. This chain is Protein RESTRICTED TEV MOVEMENT 1 (RTM1), found in Arabidopsis thaliana (Mouse-ear cress).